A 118-amino-acid chain; its full sequence is DNA-binding protein YG5714_1868 (118 aa).

It belongs to the PDCD5 family.

The protein is DNA-binding protein YG5714_1868 of Saccharolobus islandicus (strain Y.G.57.14 / Yellowstone #1) (Sulfolobus islandicus).